Here is a 143-residue protein sequence, read N- to C-terminus: Small ribosomal subunit protein uS9 (143 aa).

Residue serine 2 is modified to N-acetylserine. A disordered region spans residues 123-143 (MPEPKKFGGKGARSRYQKSYR). Positions 134–143 (ARSRYQKSYR) are enriched in basic residues.

The protein belongs to the universal ribosomal protein uS9 family.

The protein is Small ribosomal subunit protein uS9 (RPS16) of Maudiozyma exigua (Yeast).